Reading from the N-terminus, the 375-residue chain is Dual-specificity RNA methyltransferase RlmN (375 aa).

The Proton acceptor role is filled by Glu94. The region spanning 100–339 (EEDRATLCVS…VTVRKTRGDD (240 aa)) is the Radical SAM core domain. The cysteines at positions 107 and 344 are disulfide-linked. 3 residues coordinate [4Fe-4S] cluster: Cys114, Cys118, and Cys121. S-adenosyl-L-methionine is bound by residues 168–169 (GE), Ser200, 222–224 (SLH), and Asn301. The active-site S-methylcysteine intermediate is Cys344.

The protein belongs to the radical SAM superfamily. RlmN family. [4Fe-4S] cluster serves as cofactor.

It is found in the cytoplasm. It carries out the reaction adenosine(2503) in 23S rRNA + 2 reduced [2Fe-2S]-[ferredoxin] + 2 S-adenosyl-L-methionine = 2-methyladenosine(2503) in 23S rRNA + 5'-deoxyadenosine + L-methionine + 2 oxidized [2Fe-2S]-[ferredoxin] + S-adenosyl-L-homocysteine. The enzyme catalyses adenosine(37) in tRNA + 2 reduced [2Fe-2S]-[ferredoxin] + 2 S-adenosyl-L-methionine = 2-methyladenosine(37) in tRNA + 5'-deoxyadenosine + L-methionine + 2 oxidized [2Fe-2S]-[ferredoxin] + S-adenosyl-L-homocysteine. Functionally, specifically methylates position 2 of adenine 2503 in 23S rRNA and position 2 of adenine 37 in tRNAs. m2A2503 modification seems to play a crucial role in the proofreading step occurring at the peptidyl transferase center and thus would serve to optimize ribosomal fidelity. This is Dual-specificity RNA methyltransferase RlmN from Vibrio parahaemolyticus serotype O3:K6 (strain RIMD 2210633).